Consider the following 366-residue polypeptide: Cell division protein FtsZ 1 (366 aa).

GTP is bound by residues 45–49 (GAGCN), 132–134 (GTG), E163, R167, and D210. Over residues 344–354 (PEEETPLETPE) the composition is skewed to acidic residues. The segment at 344–366 (PEEETPLETPEESPSIEISIPEL) is disordered. Residues 355-366 (ESPSIEISIPEL) show a composition bias toward low complexity.

It belongs to the FtsZ family. In terms of assembly, homodimer. Polymerizes to form a dynamic ring structure in a strictly GTP-dependent manner. Interacts directly with several other division proteins.

The protein localises to the cytoplasm. Functionally, essential cell division protein that forms a contractile ring structure (Z ring) at the future cell division site. The regulation of the ring assembly controls the timing and the location of cell division. One of the functions of the FtsZ ring is to recruit other cell division proteins to the septum to produce a new cell wall between the dividing cells. Binds GTP and shows GTPase activity. This is Cell division protein FtsZ 1 from Pyrococcus woesei.